We begin with the raw amino-acid sequence, 209 residues long: Histidine biosynthesis bifunctional protein HisIE (209 aa).

A phosphoribosyl-AMP cyclohydrolase region spans residues 1 to 116 (MKQADELRFN…EEQAADRFGI (116 aa)). Residues 117–209 (MNELERVIAE…LKKRHSEIEE (93 aa)) form a phosphoribosyl-ATP pyrophosphohydrolase region.

This sequence in the N-terminal section; belongs to the PRA-CH family. The protein in the C-terminal section; belongs to the PRA-PH family.

It localises to the cytoplasm. The catalysed reaction is 1-(5-phospho-beta-D-ribosyl)-ATP + H2O = 1-(5-phospho-beta-D-ribosyl)-5'-AMP + diphosphate + H(+). The enzyme catalyses 1-(5-phospho-beta-D-ribosyl)-5'-AMP + H2O = 1-(5-phospho-beta-D-ribosyl)-5-[(5-phospho-beta-D-ribosylamino)methylideneamino]imidazole-4-carboxamide. Its pathway is amino-acid biosynthesis; L-histidine biosynthesis; L-histidine from 5-phospho-alpha-D-ribose 1-diphosphate: step 2/9. It functions in the pathway amino-acid biosynthesis; L-histidine biosynthesis; L-histidine from 5-phospho-alpha-D-ribose 1-diphosphate: step 3/9. In Bacillus subtilis (strain 168), this protein is Histidine biosynthesis bifunctional protein HisIE (hisI).